A 430-amino-acid polypeptide reads, in one-letter code: Replication protein A 32 kDa subunit C (430 aa).

Positions 14 to 46 (MPSQRSGAPAPEYSAAGTGAAAAPSPSKPRDPR) are disordered. Positions 23-38 (APEYSAAGTGAAAAPS) are enriched in low complexity. Residues 86–160 (VRVLGRVVSV…QGLARSIRPI (75 aa)) constitute a DNA-binding region (OB).

It belongs to the replication factor A protein 2 family. As to quaternary structure, heterotrimer of RPA1, RPA2 and RPA3 (canonical replication protein A complex). Interacts with RPA1C and RPA3. Phosphorylated in a cell-cycle-dependent manner (from the S phase until mitosis). In response to DNA damage, recruited to DNA-repair nuclear foci, as a hypophosphorylated form.

The protein resides in the nucleus. In terms of biological role, component of the replication protein A complex (RPA) required for DNA recombination, repair and replication. The activity of RPA is mediated by single-stranded DNA binding and protein interactions. This chain is Replication protein A 32 kDa subunit C (RPA2C), found in Oryza sativa subsp. japonica (Rice).